A 200-amino-acid chain; its full sequence is 3-isopropylmalate dehydratase small subunit (200 aa).

It belongs to the LeuD family. LeuD type 1 subfamily. Heterodimer of LeuC and LeuD.

The enzyme catalyses (2R,3S)-3-isopropylmalate = (2S)-2-isopropylmalate. It participates in amino-acid biosynthesis; L-leucine biosynthesis; L-leucine from 3-methyl-2-oxobutanoate: step 2/4. In terms of biological role, catalyzes the isomerization between 2-isopropylmalate and 3-isopropylmalate, via the formation of 2-isopropylmaleate. In Pectobacterium carotovorum subsp. carotovorum (strain PC1), this protein is 3-isopropylmalate dehydratase small subunit.